Consider the following 118-residue polypeptide: Acidic elicitin A1 (118 aa).

Positions 1–20 (MNFRALFAATVAALVGSTSA) are cleaved as a signal peptide. Cystine bridges form between cysteine 23-cysteine 91, cysteine 47-cysteine 76, and cysteine 71-cysteine 115.

Belongs to the elicitin family.

The protein localises to the secreted. Its function is as follows. Induces local and distal defense responses (incompatible hypersensitive reaction) in plants from the solanaceae and cruciferae families. Elicits leaf necrosis and causes the accumulation of pathogenesis-related proteins. Might interact with the lipidic molecules of the plasma membrane. This is Acidic elicitin A1 (B14) from Phytophthora cryptogea.